A 283-amino-acid polypeptide reads, in one-letter code: Formamidopyrimidine-DNA glycosylase (283 aa).

The Schiff-base intermediate with DNA role is filled by proline 2. The active-site Proton donor is glutamate 3. Catalysis depends on lysine 58, which acts as the Proton donor; for beta-elimination activity. Residues histidine 100, arginine 119, and arginine 162 each contribute to the DNA site. An FPG-type zinc finger spans residues arginine 247 to arginine 283. Catalysis depends on arginine 273, which acts as the Proton donor; for delta-elimination activity.

Belongs to the FPG family. Monomer. Zn(2+) is required as a cofactor.

The catalysed reaction is Hydrolysis of DNA containing ring-opened 7-methylguanine residues, releasing 2,6-diamino-4-hydroxy-5-(N-methyl)formamidopyrimidine.. The enzyme catalyses 2'-deoxyribonucleotide-(2'-deoxyribose 5'-phosphate)-2'-deoxyribonucleotide-DNA = a 3'-end 2'-deoxyribonucleotide-(2,3-dehydro-2,3-deoxyribose 5'-phosphate)-DNA + a 5'-end 5'-phospho-2'-deoxyribonucleoside-DNA + H(+). Its function is as follows. Involved in base excision repair of DNA damaged by oxidation or by mutagenic agents. Acts as a DNA glycosylase that recognizes and removes damaged bases. Has a preference for oxidized purines, such as 7,8-dihydro-8-oxoguanine (8-oxoG). Has AP (apurinic/apyrimidinic) lyase activity and introduces nicks in the DNA strand. Cleaves the DNA backbone by beta-delta elimination to generate a single-strand break at the site of the removed base with both 3'- and 5'-phosphates. The protein is Formamidopyrimidine-DNA glycosylase of Cereibacter sphaeroides (strain KD131 / KCTC 12085) (Rhodobacter sphaeroides).